Reading from the N-terminus, the 908-residue chain is Translation initiation factor IF-2 (908 aa).

Disordered regions lie at residues 122–180 (PVVE…VDDA) and 203–267 (EKAR…AVKK). The segment covering 132 to 143 (VAAEPEVVEAPE) has biased composition (acidic residues). Positions 157 to 166 (EEPAAPAAPV) are enriched in low complexity. The span at 223–248 (AKEDARPTKHVEDLAKLKKPHDKKDE) shows a compositional bias: basic and acidic residues. Over residues 256–267 (KHNKKAGKAVKK) the composition is skewed to basic residues. The tr-type G domain occupies 409–578 (PRAPIVTVMG…ALQAELLELS (170 aa)). The tract at residues 418-425 (GHVDHGKT) is G1. 418–425 (GHVDHGKT) contacts GTP. Residues 443–447 (GITQH) form a G2 region. The G3 stretch occupies residues 464 to 467 (DTPG). GTP-binding positions include 464 to 468 (DTPGH) and 518 to 521 (NKMD). The G4 stretch occupies residues 518–521 (NKMD). Residues 554–556 (SAH) are G5.

It belongs to the TRAFAC class translation factor GTPase superfamily. Classic translation factor GTPase family. IF-2 subfamily.

The protein localises to the cytoplasm. In terms of biological role, one of the essential components for the initiation of protein synthesis. Protects formylmethionyl-tRNA from spontaneous hydrolysis and promotes its binding to the 30S ribosomal subunits. Also involved in the hydrolysis of GTP during the formation of the 70S ribosomal complex. This is Translation initiation factor IF-2 from Saccharophagus degradans (strain 2-40 / ATCC 43961 / DSM 17024).